Consider the following 181-residue polypeptide: Shikimate kinase (181 aa).

23-28 (GTGKST) contributes to the ATP binding site. Ser-27 is a Mg(2+) binding site. 3 residues coordinate substrate: Asp-45, Arg-69, and Gly-91. ATP is bound at residue Arg-129. Substrate is bound at residue Arg-148.

The protein belongs to the shikimate kinase family. As to quaternary structure, monomer. Mg(2+) is required as a cofactor.

The protein resides in the cytoplasm. The catalysed reaction is shikimate + ATP = 3-phosphoshikimate + ADP + H(+). It participates in metabolic intermediate biosynthesis; chorismate biosynthesis; chorismate from D-erythrose 4-phosphate and phosphoenolpyruvate: step 5/7. Catalyzes the specific phosphorylation of the 3-hydroxyl group of shikimic acid using ATP as a cosubstrate. The polypeptide is Shikimate kinase (Geobacter sulfurreducens (strain ATCC 51573 / DSM 12127 / PCA)).